We begin with the raw amino-acid sequence, 410 residues long: Tegument protein VP16 homolog (410 aa).

Positions P388–R410 are disordered.

Belongs to the herpesviridae tegument protein VP16 protein family. In terms of assembly, associates with the VP16-induced complex; binding to host HCFC1 activates VP16 for association with the octamer motif-binding host protein POU2F1, to form a multiprotein-DNA complex responsible for activating transcription of the viral immediate early genes.

The protein resides in the virion tegument. It localises to the host nucleus. In terms of biological role, transcriptional activator of immediate-early (IE) gene products (alpha genes). Acts as a key activator of lytic infection by initiating the lytic program through the assembly of the transcriptional regulatory VP16-induced complex composed of VP16 and two cellular factors, HCFC1 and POU2F1. VP16-induced complex represents a regulatory switch: when it is on, it promotes IE-gene expression and thus lytic infection, and when it is off, it limits IE-gene transcription favoring latent infection. Functionally, may play a role in the aggregation of tegument proteins around nucleocapsids during virus morphogenesis. In Varicella-zoster virus (strain Dumas) (HHV-3), this protein is Tegument protein VP16 homolog.